Consider the following 84-residue polypeptide: Putative membrane protein insertion efficiency factor (84 aa).

Residues Gly-64–Glu-84 are disordered. Positions His-75 to Glu-84 are enriched in basic residues.

The protein belongs to the UPF0161 family.

The protein resides in the cell inner membrane. Its function is as follows. Could be involved in insertion of integral membrane proteins into the membrane. The polypeptide is Putative membrane protein insertion efficiency factor (Caulobacter vibrioides (strain ATCC 19089 / CIP 103742 / CB 15) (Caulobacter crescentus)).